The primary structure comprises 274 residues: NH(3)-dependent NAD(+) synthetase (274 aa).

Residue 46 to 53 (GISGGQDS) coordinates ATP. A Mg(2+)-binding site is contributed by Asp52. Position 140 (Arg140) interacts with deamido-NAD(+). Residue Thr160 coordinates ATP. Glu165 is a Mg(2+) binding site. The deamido-NAD(+) site is built by Lys173 and Asp180. ATP-binding residues include Lys189 and Thr211. 260 to 261 (HK) contacts deamido-NAD(+).

Belongs to the NAD synthetase family. In terms of assembly, homodimer.

The catalysed reaction is deamido-NAD(+) + NH4(+) + ATP = AMP + diphosphate + NAD(+) + H(+). It participates in cofactor biosynthesis; NAD(+) biosynthesis; NAD(+) from deamido-NAD(+) (ammonia route): step 1/1. Its function is as follows. Catalyzes the ATP-dependent amidation of deamido-NAD to form NAD. Uses ammonia as a nitrogen source. The protein is NH(3)-dependent NAD(+) synthetase of Lactococcus lactis subsp. cremoris (strain MG1363).